The sequence spans 363 residues: NADH-quinone oxidoreductase subunit H (363 aa).

9 helical membrane-spanning segments follow: residues 62–82, 94–114, 127–147, 166–186, 202–222, 239–257, 264–286, 293–313, and 339–359; these read GPMY…KLLF, AIFV…WAVV, VGLL…ILAG, VVSY…AAGS, FFDW…VSGV, IVAG…LFFL, ILVS…QGWV, LIDW…LFFA, and FIPL…SGVI.

Belongs to the complex I subunit 1 family. NDH-1 is composed of 14 different subunits. Subunits NuoA, H, J, K, L, M, N constitute the membrane sector of the complex.

It localises to the cell inner membrane. It catalyses the reaction a quinone + NADH + 5 H(+)(in) = a quinol + NAD(+) + 4 H(+)(out). NDH-1 shuttles electrons from NADH, via FMN and iron-sulfur (Fe-S) centers, to quinones in the respiratory chain. The immediate electron acceptor for the enzyme in this species is believed to be ubiquinone. Couples the redox reaction to proton translocation (for every two electrons transferred, four hydrogen ions are translocated across the cytoplasmic membrane), and thus conserves the redox energy in a proton gradient. This subunit may bind ubiquinone. The polypeptide is NADH-quinone oxidoreductase subunit H (Xylella fastidiosa (strain 9a5c)).